A 377-amino-acid chain; its full sequence is Leukocyte elastase inhibitor (377 aa).

Met1 is modified (N-acetylmethionine).

It belongs to the serpin family. Ov-serpin subfamily.

Its subcellular location is the cytoplasm. Regulates the activity of the neutrophil proteases. The polypeptide is Leukocyte elastase inhibitor (serpinb1) (Xenopus laevis (African clawed frog)).